The sequence spans 588 residues: Protein kintoun (588 aa).

3 disordered regions span residues 199–223 (PGYEAKEPPEERDLSPSTSHLPENS), 338–498 (PPLE…SSQE), and 510–535 (AANVNASDETSKRKPTEEQLEDADED). Positions 202-212 (EAKEPPEERDL) are enriched in basic and acidic residues. The span at 350–361 (PNPTSDPQNENQ) shows a compositional bias: polar residues. Composition is skewed to basic and acidic residues over residues 362–382 (TRVEERVEEMAEKGGEQHQRG) and 393–433 (QVLE…KFEL). Residues 435-447 (DVQQENKGNCSNT) are compositionally biased toward polar residues. A compositionally biased stretch (basic and acidic residues) spans 448 to 460 (KEVKCCRRTKDSL).

The protein belongs to the PIH1 family. Kintoun subfamily.

The protein localises to the cytoplasm. It is found in the dynein axonemal particle. In terms of biological role, required for cytoplasmic pre-assembly of axonemal dyneins, thereby playing a central role in motility in cilia and flagella. Involved in pre-assembly of dynein arm complexes in the cytoplasm before intraflagellar transport loads them for the ciliary compartment. This Oryzias latipes (Japanese rice fish) protein is Protein kintoun.